The chain runs to 202 residues: Superoxide dismutase [Mn] (202 aa).

His-27 contributes to the Mn(2+) binding site. A phosphothreonine mark is found at Thr-34 and Thr-70. Residues His-82, Asp-164, and His-168 each contribute to the Mn(2+) site.

It belongs to the iron/manganese superoxide dismutase family. Homodimer; under aerobic conditions. Under anaerobic conditions it is a component of the so-called 'green protein' complex (GPC), which consists of at least two components, SodA and a nucleoside diphosphate kinase (NDK). It depends on Mn(2+) as a cofactor.

The protein resides in the cytoplasm. The catalysed reaction is 2 superoxide + 2 H(+) = H2O2 + O2. Functionally, destroys superoxide anion radicals which are normally produced within the cells and which are toxic to biological systems. Active only in homodimeric state. The polypeptide is Superoxide dismutase [Mn] (sodA) (Virgibacillus halodenitrificans (Bacillus halodenitrificans)).